The following is a 110-amino-acid chain: Disintegrin jerdostatin (110 aa).

Positions 1-20 are cleaved as a signal peptide; the sequence is MIQVLLVTICLAVFPYQVSS. Residues 21-67 constitute a propeptide that is removed on maturation; it reads KTLKSGSVNEYEVVNPGTVTGLPKGAVKQPEKKHEPMKGNTLQKLPL. Residues 27–110 enclose the Disintegrin domain; sequence SVNEYEVVNP…CECPSYPGNG (84 aa). Disulfide bonds link C68/C77, C73/C96, C74/C101, and C86/C103. A Cell attachment site; atypical (RTS) motif is present at residues 88-90; it reads RTS.

The protein belongs to the disintegrin family. Short disintegrin subfamily. As to quaternary structure, monomer. In terms of processing, two conformers are found, they may differ by their disulfide bond connectivities. Conformer 2 is 33 times less active than conformer 1. Conformer 2 may represent a non-native protein. The C-terminal dipeptide may be post-translationally removed, as seen in disintegrins that possess a KTS integrin-binding motif. Expressed by the venom gland.

The protein resides in the secreted. Its function is as follows. Recombinant protein inhibits the adhesion of alpha-1/beta-1-K562 (ITGA1/ITGB1) cells to collagen IV with an IC(50) of 80 nM. This Protobothrops jerdonii (Jerdon's pitviper) protein is Disintegrin jerdostatin.